Consider the following 321-residue polypeptide: 4-hydroxy-2-oxoglutarate aldolase, mitochondrial (321 aa).

A mitochondrion-targeting transit peptide spans 1–23; that stretch reads MLGPQIWASMRQGLSRGLSRNVK. Substrate is bound at residue 71-72; sequence ST. Lysine 190 functions as the Schiff-base intermediate with substrate in the catalytic mechanism. 2 residues coordinate substrate: serine 192 and glycine 216.

Belongs to the DapA family. Homotetramer.

The protein resides in the mitochondrion. It carries out the reaction (4S)-4-hydroxy-2-oxoglutarate = glyoxylate + pyruvate. The catalysed reaction is (4R)-4-hydroxy-2-oxoglutarate = glyoxylate + pyruvate. With respect to regulation, inhibited by divalent cations. Catalyzes the final step in the metabolic pathway of hydroxyproline. This Mus musculus (Mouse) protein is 4-hydroxy-2-oxoglutarate aldolase, mitochondrial (Hoga1).